A 289-amino-acid polypeptide reads, in one-letter code: Glycine--tRNA ligase alpha subunit (289 aa).

Belongs to the class-II aminoacyl-tRNA synthetase family. In terms of assembly, tetramer of two alpha and two beta subunits.

Its subcellular location is the cytoplasm. The enzyme catalyses tRNA(Gly) + glycine + ATP = glycyl-tRNA(Gly) + AMP + diphosphate. This Rickettsia akari (strain Hartford) protein is Glycine--tRNA ligase alpha subunit.